A 910-amino-acid chain; its full sequence is Seizure 6-like protein 2 (910 aa).

Residues 1 to 27 form the signal peptide; it reads MGTPRAQHPPPPQLLFLILLSCPWIQG. At 28–844 the chain is on the extracellular side; it reads LPLKEEEILP…DPSRQLEGGN (817 aa). The tract at residues 41–48 is O-glycosylated at one site; that stretch reads SETPTVAS. The segment at 65–152 is disordered; that stretch reads EMGYLPGSDR…PLGPEGGEEE (88 aa). Over residues 123–145 the composition is skewed to pro residues; sequence LTPPPGTTAPPPPSPASPGPPLG. An intrachain disulfide couples C173 to C202. Positions 173 to 286 constitute a CUB 1 domain; the sequence is CNNNISEGEG…GGFRIHYQAY (114 aa). N176, N222, and N247 each carry an N-linked (GlcNAc...) asparagine glycan. The Sushi 1 domain maps to 288-347; it reads LSCGFPPRPAHGDVSVTDLHPGGTATFHCDSGYQLQGEETLICLNGTRPSWNGETPSCMA. 6 cysteine pairs are disulfide-bonded: C290/C330, C316/C345, C349/C376, C464/C508, C491/C523, and C527/C553. N-linked (GlcNAc...) asparagine glycans are attached at residues N332, N355, N373, N473, and N517. The 111-residue stretch at 349 to 459 folds into the CUB 2 domain; the sequence is CGGTIHNATL…LLLSLRFEAF (111 aa). Residues 462-525 form the Sushi 2 domain; the sequence is DRCFAPFLAH…WNDTEPACKA (64 aa). Residues 527–638 enclose the CUB 3 domain; sequence CGGELSEPAG…QGFVLHFKEV (112 aa). A glycan (N-linked (GlcNAc...) asparagine) is linked at N641. Sushi domains lie at 642–701, 703–766, and 769–830; these read DTCP…ACQK, MTCA…KCAL, and EPCL…LCKV. 6 disulfide bridges follow: C644–C686, C672–C699, C705–C747, C733–C764, C771–C813, and C799–C828. Residues 845-865 traverse the membrane as a helical segment; it reads LALAILLPLGLVIVLGSGVYI. Over 866–910 the chain is Cytoplasmic; the sequence is YYTKLQGKSLFGFSGSHSYSPITVESDFSNPLYEAGDTREYEVSI.

The protein belongs to the SEZ6 family. Post-translationally, O-glycosylated with core 1 or possibly core 8 glycans.

It is found in the cell membrane. The protein resides in the endoplasmic reticulum membrane. In terms of biological role, may contribute to specialized endoplasmic reticulum functions in neurons. This is Seizure 6-like protein 2 (SEZ6L2) from Homo sapiens (Human).